A 455-amino-acid polypeptide reads, in one-letter code: UDP-N-acetylmuramoyl-tripeptide--D-alanyl-D-alanine ligase (455 aa).

An ATP-binding site is contributed by 107-113; sequence GSCGKTS.

It belongs to the MurCDEF family. MurF subfamily.

The protein resides in the cytoplasm. It catalyses the reaction D-alanyl-D-alanine + UDP-N-acetyl-alpha-D-muramoyl-L-alanyl-gamma-D-glutamyl-meso-2,6-diaminopimelate + ATP = UDP-N-acetyl-alpha-D-muramoyl-L-alanyl-gamma-D-glutamyl-meso-2,6-diaminopimeloyl-D-alanyl-D-alanine + ADP + phosphate + H(+). The protein operates within cell wall biogenesis; peptidoglycan biosynthesis. Its function is as follows. Involved in cell wall formation. Catalyzes the final step in the synthesis of UDP-N-acetylmuramoyl-pentapeptide, the precursor of murein. The chain is UDP-N-acetylmuramoyl-tripeptide--D-alanyl-D-alanine ligase from Buchnera aphidicola subsp. Acyrthosiphon pisum (strain APS) (Acyrthosiphon pisum symbiotic bacterium).